Here is a 208-residue protein sequence, read N- to C-terminus: Mitochondrial import inner membrane translocase subunit Tim23 (208 aa).

3 helical membrane-spanning segments follow: residues 73-93 (FELA…FGTL), 125-145 (ASWA…GVAI), and 173-193 (GLKG…LYAL).

Belongs to the Tim17/Tim22/Tim23 family. As to quaternary structure, component of the TIM23 complex at least composed of timm23, timm17 and timm50. The complex interacts with the timm44 component of the PAM complex.

Its subcellular location is the mitochondrion inner membrane. Its function is as follows. Essential component of the TIM23 complex, a complex that mediates the translocation of transit peptide-containing proteins across the mitochondrial inner membrane. Plays an essential role in early embryonic development. The sequence is that of Mitochondrial import inner membrane translocase subunit Tim23 (timm23) from Danio rerio (Zebrafish).